The chain runs to 213 residues: Ion-translocating oxidoreductase complex subunit A (213 aa).

Residues 1–24 (MLLLWQSRIMPGSEANIYITMTEY) lie on the Periplasmic side of the membrane. The helical transmembrane segment at 25 to 45 (LLLLIGTVLVNNFVLVKFLGL) threads the bilayer. The Cytoplasmic portion of the chain corresponds to 46 to 58 (CPFMGVSKKLETA). Residues 59 to 79 (IGMGLATTFVLTLASVCAYLV) form a helical membrane-spanning segment. Residues 80–86 (ESYVLRP) lie on the Periplasmic side of the membrane. A helical transmembrane segment spans residues 87 to 107 (LGIEYLRTMSFILVIAVVVQF). Residues 108 to 121 (TEMVVHKTSPTLYR) are Cytoplasmic-facing. Residues 122 to 142 (LLGIFLPLITTNCAVLGVALL) form a helical membrane-spanning segment. At 143-153 (NINENHNFIQS) the chain is on the periplasmic side. A helical transmembrane segment spans residues 154–174 (IIYGFGAAVGFSLVLILFASM). Residues 175 to 190 (RERIHVADVPAPFKGA) are Cytoplasmic-facing. The helical transmembrane segment at 191-211 (SIAMITAGLMSLAFMGFTGLV) threads the bilayer. The Periplasmic portion of the chain corresponds to 212-213 (KL).

Belongs to the NqrDE/RnfAE family. The complex is composed of six subunits: RnfA, RnfB, RnfC, RnfD, RnfE and RnfG.

The protein localises to the cell inner membrane. Functionally, part of a membrane-bound complex that couples electron transfer with translocation of ions across the membrane. The polypeptide is Ion-translocating oxidoreductase complex subunit A (Vibrio cholerae serotype O1 (strain ATCC 39541 / Classical Ogawa 395 / O395)).